The sequence spans 297 residues: MSSAHFNRGPAYGLSAEVKNKLAQKYDHQREQELREWIEGVTGRRIGSNFMDGLKDGIILCEFINKLQPGSVKKVNESTQNWHQLENIGNFIKAITKYGVKPHDIFEANDLFENTNHTQVQSTLLALASMAKTKGNKVNVGVKYAEKQERRFEPEKLREGRNIIGLQMGTNKFASQQGMTAYGTRRHLYDPKLGTDQPLDQATISLQMGTNKGASQAGMTAPGTKRQIFEPGLGMEHCDTLNVSLQMGSNKGASQRGMTVYGLPRQVYDPKYCLTPEYPELDEPTHNHHPHNYYNSA.

The region spanning 28-131 is the Calponin-homology (CH) domain; it reads HQREQELREW…STLLALASMA (104 aa). Phosphoserine is present on S48. Calponin-like repeat units lie at residues 164-189, 204-229, and 243-268; these read IGLQ…RHLY, ISLQ…RQIF, and VSLQ…RQVY. Position 170 is a phosphothreonine; by ROCK2 (T170). S175 bears the Phosphoserine; by ROCK2 mark. Residues T180 and T184 each carry the phosphothreonine; by ROCK2 modification. At T259 the chain carries Phosphothreonine; by ROCK2.

The protein belongs to the calponin family. In terms of assembly, part of cGMP kinase signaling complex at least composed of ACTA2/alpha-actin, CNN1/calponin H1, PLN/phospholamban, PRKG1 and ITPR1. Smooth muscle, and tissues containing significant amounts of smooth muscle.

Its function is as follows. Thin filament-associated protein that is implicated in the regulation and modulation of smooth muscle contraction. It is capable of binding to actin, calmodulin and tropomyosin. The interaction of calponin with actin inhibits the actomyosin Mg-ATPase activity. This is Calponin-1 (Cnn1) from Rattus norvegicus (Rat).